The sequence spans 349 residues: Arginine kinase (349 aa).

The region spanning 3–85 (DLAELWEKVS…LGPVILDYHK (83 aa)) is the Phosphagen kinase N-terminal domain. Position 58-62 (58-62 (GVGVY)) interacts with substrate. Residues 113–349 (WIVSTRVRVG…EEIIKLEKAA (237 aa)) form the Phosphagen kinase C-terminal domain. ATP is bound by residues 116–120 (STRVR) and His-179. Glu-219 lines the substrate pocket. Arg-223 contacts ATP. Cys-265 serves as a coordination point for substrate. Residues 274 to 278 (RASVH) and 302 to 307 (RGIHGE) each bind ATP. Substrate is bound at residue Glu-307.

The protein belongs to the ATP:guanido phosphotransferase family.

It catalyses the reaction L-arginine + ATP = N(omega)-phospho-L-arginine + ADP + H(+). The chain is Arginine kinase from Liolophura japonica (Chiton).